Reading from the N-terminus, the 348-residue chain is Trace amine-associated receptor 9 (348 aa).

At 1-33 (MTSDFSPEPPMELCYENVNGSCIKSSYAPWPRA) the chain is on the extracellular side. An N-linked (GlcNAc...) asparagine glycan is attached at Asn19. Disulfide bonds link Cys22–Cys186 and Cys105–Cys190. Residues 34–58 (ILYGVLGLGALLAVFGNLLVIIAIL) form a helical membrane-spanning segment. Residues 59–68 (HFKQLHTPTN) lie on the Cytoplasmic side of the membrane. Residues 69 to 90 (FLVASLACADFLVGVTVMPFST) form a helical membrane-spanning segment. Over 91–105 (VRSVESCWYFGESYC) the chain is Extracellular. A helical membrane pass occupies residues 106-128 (KFHTCFDTSFCFASLFHLCCISI). Spermidine contacts are provided by Asp112 and Thr113. Over 129 to 148 (DRYIAVTDPLTYPTKFTVSV) the chain is Cytoplasmic. The chain crosses the membrane as a helical span at residues 149–170 (SGLCIALSWFFSVTYSFSIFYT). Residues 171–196 (GANEEGIEELVVALTCVGGCQAPLNQ) are Extracellular-facing. The tract at residues 174–187 (EEGIEELVVALTCV) is extracellular Loop 2 (ECL2). Residues 197–218 (NWVLLCFLLFFLPTVVMVFLYG) form a helical membrane-spanning segment. Residues 219–256 (RIFLVAKYQARKIEGTANQAQASSESYKERVAKRERKA) lie on the Cytoplasmic side of the membrane. Residues 257–280 (AKTLGIAMAAFLVSWLPYIIDAVI) form a helical membrane-spanning segment. Topologically, residues 281–293 (DAYMNFITPAYVY) are extracellular. The helical transmembrane segment at 294–314 (EILVWCVYYNSAMNPLIYAFF) threads the bilayer. Topologically, residues 315 to 348 (YPWFRKAIKLIVSGKVFRADSSTTNLFSEEAGAG) are cytoplasmic.

This sequence belongs to the G-protein coupled receptor 1 family. In terms of tissue distribution, specifically expressed in neurons of the olfactory epithelium.

It localises to the cell membrane. Olfactory receptor specific for trace amines, such as triethylamine, N,N-dimethylcyclohexylamine (DMCHA), beta-phenylethylamine (beta-PEA), cadaverine (CAD) and polyamines such as spermine and spermidine. Trace amine compounds are enriched in animal body fluids and act on trace amine-associated receptors (TAARs) to elicit both intraspecific and interspecific innate behaviors. Trace amine-binding causes a conformation change that triggers signaling via G(s)-class of G alpha proteins (GNAL or GNAS). In mature olfactory sensory neurons, Taar9 is coupled with GNAL/G(olf)G alpha protein and mediates activation of adenylate cyclase activity to activate cAMP signaling and eventually transmit odorant signals to achieve membrane depolarization. In immature olfactory sensory neurons, Taar9 is coupled with GNAS/G(s) G alpha proteins. This Mus musculus (Mouse) protein is Trace amine-associated receptor 9.